A 383-amino-acid chain; its full sequence is Putative F-box protein At4g09190 (383 aa).

The region spanning 16 to 67 (RSQREHIPLDLIVEIVSSLPAKSIVRFRSVSKLWSSIITTPDFTSSVVTRSL) is the F-box domain.

In Arabidopsis thaliana (Mouse-ear cress), this protein is Putative F-box protein At4g09190.